Reading from the N-terminus, the 549-residue chain is MTSQEYEPIQWSDESQTNNDSVNDAYADVNTTHESRRRTTLQPNSTSQSMIGTLRKYARFIGPGLMVSVSYMDPGNYSTAVAAGSAHRYKLLFSVLVSNFMAAFWQYLCARLGAVTGLDLAQNCKKHLPFGLNITLYILAEMAIIATDLAEVVGTAISLNILFHIPLALGVILTVVDVLIVLLAYKPNGSMKGIRIFEAFVSLLVVLTVVCFTVELFYAKLGPAKEIFSGFLPSKAVFEGDGLYLSLAILGATVMPHSLYLGSGVVQPRLREYDIKNGHYLPDANDMDNNHDNYRPSYEAISETLHFTITELLISLFTVALFVNCAILIVSGATLYGSTQNAEEADLFSIYNLLCSTLSKGAGTVFVLALLFSGQSAGIVCTLSGQMVSEGFLNWTVSPALRRSATRAVAITPCLILVLVAGRSGLSGALNASQVVLSLLLPFVSAPLLYFTSSKKIMRVQLNRTKELSRTTDKKPVADRTEDDETIELEEMGIGSSSQERSLVSPAPEYKDMSNGMIVTVLAIIVWLIISGLNFYMLLGFTTGKEVHL.

A disordered region spans residues 1-23 (MTSQEYEPIQWSDESQTNNDSVN). The segment covering 12-22 (SDESQTNNDSV) has biased composition (polar residues). A run of 8 helical transmembrane segments spans residues 91 to 109 (LLFSVLVSNFMAAFWQYLC), 130 to 147 (FGLNITLYILAEMAIIAT), 161 to 185 (ILFHIPLALGVILTVVDVLIVLLAY), 196 to 214 (IFEAFVSLLVVLTVVCFTV), 312 to 332 (LLISLFTVALFVNCAILIVSG), 350 to 372 (IYNLLCSTLSKGAGTVFVLALLF), 432 to 452 (ASQVVLSLLLPFVSAPLLYFT), and 521 to 541 (VLAIIVWLIISGLNFYMLLGF).

The protein belongs to the NRAMP family.

It is found in the vacuole lumen. The protein localises to the vesicle. Its subcellular location is the cell membrane. It catalyses the reaction Mn(2+)(in) = Mn(2+)(out). Functionally, high-affinity manganese transporter involved in manganese uptake from the extracellular environment. The chain is Manganese transporter SMF2 (SMF2) from Saccharomyces cerevisiae (strain ATCC 204508 / S288c) (Baker's yeast).